The chain runs to 357 residues: DNA polymerase IV (357 aa).

The UmuC domain maps to isoleucine 4–glycine 185. Residues aspartate 8 and aspartate 103 each coordinate Mg(2+). The active site involves glutamate 104.

Belongs to the DNA polymerase type-Y family. In terms of assembly, monomer. Requires Mg(2+) as cofactor.

Its subcellular location is the cytoplasm. It carries out the reaction DNA(n) + a 2'-deoxyribonucleoside 5'-triphosphate = DNA(n+1) + diphosphate. Its function is as follows. Poorly processive, error-prone DNA polymerase involved in untargeted mutagenesis. Copies undamaged DNA at stalled replication forks, which arise in vivo from mismatched or misaligned primer ends. These misaligned primers can be extended by PolIV. Exhibits no 3'-5' exonuclease (proofreading) activity. May be involved in translesional synthesis, in conjunction with the beta clamp from PolIII. The protein is DNA polymerase IV of Ralstonia nicotianae (strain ATCC BAA-1114 / GMI1000) (Ralstonia solanacearum).